The chain runs to 272 residues: Acetylglutamate kinase (272 aa).

Substrate-binding positions include 46-47 (GA), Arg-68, and Asn-166.

This sequence belongs to the acetylglutamate kinase family. ArgB subfamily.

The protein resides in the cytoplasm. The enzyme catalyses N-acetyl-L-glutamate + ATP = N-acetyl-L-glutamyl 5-phosphate + ADP. Its pathway is amino-acid biosynthesis; L-arginine biosynthesis; N(2)-acetyl-L-ornithine from L-glutamate: step 2/4. Its function is as follows. Catalyzes the ATP-dependent phosphorylation of N-acetyl-L-glutamate. The chain is Acetylglutamate kinase from Dehalococcoides mccartyi (strain ATCC BAA-2266 / KCTC 15142 / 195) (Dehalococcoides ethenogenes (strain 195)).